The chain runs to 214 residues: Probable transaldolase 1 (214 aa).

Catalysis depends on Lys-83, which acts as the Schiff-base intermediate with substrate.

This sequence belongs to the transaldolase family. Type 3B subfamily.

The protein localises to the cytoplasm. The enzyme catalyses D-sedoheptulose 7-phosphate + D-glyceraldehyde 3-phosphate = D-erythrose 4-phosphate + beta-D-fructose 6-phosphate. The protein operates within carbohydrate degradation; pentose phosphate pathway; D-glyceraldehyde 3-phosphate and beta-D-fructose 6-phosphate from D-ribose 5-phosphate and D-xylulose 5-phosphate (non-oxidative stage): step 2/3. Transaldolase is important for the balance of metabolites in the pentose-phosphate pathway. The polypeptide is Probable transaldolase 1 (Listeria monocytogenes serotype 4b (strain F2365)).